Reading from the N-terminus, the 589-residue chain is Type I restriction enzyme EcoAI specificity subunit (589 aa).

This sequence belongs to the type-I restriction system S methylase family. As to quaternary structure, the type I restriction/modification system is composed of three polypeptides R, M and S. The restriction enzyme has stoichiometry R(2)M(2)S(1) while the methyltransferase is M(2)S(1).

The specificity (S) subunit of a type I restriction enzyme; this subunit dictates DNA sequence specificity. The M and S subunits together form a methyltransferase (MTase) that methylates A-2 on the top strand and A-3 on the bottom strand of the sequence 5'-GAGN(7)GTCA-3'. In the presence of the R subunit the complex can also act as an endonuclease, binding to the same target sequence but cutting the DNA some distance from this site. Whether the DNA is cut or modified depends on the methylation state of the target sequence. When the target site is unmodified, the DNA is cut. When the target site is hemimethylated, the complex acts as a maintenance MTase modifying the DNA so that both strands become methylated. After locating a non-methylated recognition site, the enzyme complex serves as a molecular motor that translocates DNA in an ATP-dependent manner until a collision occurs that triggers cleavage. This is Type I restriction enzyme EcoAI specificity subunit from Escherichia coli.